A 363-amino-acid polypeptide reads, in one-letter code: Phosphoserine aminotransferase (363 aa).

L-glutamate is bound at residue Arg46. Residues Ala80–Thr81, Trp106, Thr156, Asp176, and Gln199 each bind pyridoxal 5'-phosphate. Lys200 is subject to N6-(pyridoxal phosphate)lysine. A pyridoxal 5'-phosphate-binding site is contributed by Asn241–Thr242.

Belongs to the class-V pyridoxal-phosphate-dependent aminotransferase family. SerC subfamily. In terms of assembly, homodimer. The cofactor is pyridoxal 5'-phosphate.

It is found in the cytoplasm. The catalysed reaction is O-phospho-L-serine + 2-oxoglutarate = 3-phosphooxypyruvate + L-glutamate. It carries out the reaction 4-(phosphooxy)-L-threonine + 2-oxoglutarate = (R)-3-hydroxy-2-oxo-4-phosphooxybutanoate + L-glutamate. It functions in the pathway amino-acid biosynthesis; L-serine biosynthesis; L-serine from 3-phospho-D-glycerate: step 2/3. It participates in cofactor biosynthesis; pyridoxine 5'-phosphate biosynthesis; pyridoxine 5'-phosphate from D-erythrose 4-phosphate: step 3/5. Its function is as follows. Catalyzes the reversible conversion of 3-phosphohydroxypyruvate to phosphoserine and of 3-hydroxy-2-oxo-4-phosphonooxybutanoate to phosphohydroxythreonine. This Leptospira interrogans serogroup Icterohaemorrhagiae serovar copenhageni (strain Fiocruz L1-130) protein is Phosphoserine aminotransferase.